Here is an 85-residue protein sequence, read N- to C-terminus: Acyl carrier protein (85 aa).

One can recognise a Carrier domain in the interval 2–78 (SQISERVIDL…DAIAYIESHA (77 aa)). Ser-37 bears the O-(pantetheine 4'-phosphoryl)serine mark.

It belongs to the acyl carrier protein (ACP) family. 4'-phosphopantetheine is transferred from CoA to a specific serine of apo-ACP by AcpS. This modification is essential for activity because fatty acids are bound in thioester linkage to the sulfhydryl of the prosthetic group.

The protein localises to the cytoplasm. Its pathway is lipid metabolism; fatty acid biosynthesis. Its function is as follows. Carrier of the growing fatty acid chain in fatty acid biosynthesis. This Azobacteroides pseudotrichonymphae genomovar. CFP2 protein is Acyl carrier protein.